The primary structure comprises 1027 residues: 2-oxoglutarate dehydrogenase, mitochondrial (1027 aa).

The thiamine diphosphate site is built by Arg-315, Asp-413, Asn-446, Ile-448, and Gln-674. Mg(2+)-binding residues include Asp-413, Asn-446, and Ile-448.

Belongs to the alpha-ketoglutarate dehydrogenase family. Homodimer. Component of the 2-oxoglutarate dehydrogenase complex. It depends on thiamine diphosphate as a cofactor. Mg(2+) serves as cofactor.

The protein localises to the mitochondrion matrix. The enzyme catalyses N(6)-[(R)-lipoyl]-L-lysyl-[protein] + 2-oxoglutarate + H(+) = N(6)-[(R)-S(8)-succinyldihydrolipoyl]-L-lysyl-[protein] + CO2. Its function is as follows. The 2-oxoglutarate dehydrogenase complex catalyzes the overall conversion of 2-oxoglutarate to succinyl-CoA and CO(2). It contains multiple copies of three enzymatic components: 2-oxoglutarate dehydrogenase (E1), dihydrolipoamide succinyltransferase (E2) and lipoamide dehydrogenase (E3). This Caenorhabditis briggsae protein is 2-oxoglutarate dehydrogenase, mitochondrial (ogdh-1).